A 327-amino-acid polypeptide reads, in one-letter code: MPHLAELVAKAKAAVEDAQDVAALDLVRVEYLGKKGHLTLQMTSLRELPAEERPAAGAVINQAKQEVQEALNARKEKLESVVLNARLAAETIDVSLPGRRMENGGLHPVTRTIDRIETFFGELGFSVESGPEIEDDYHNFDALNIPAHHPARADHDTFWFDTTRLLRTQTSGVQIRTMKAQQPPIRIIVPGRVYRNDYDQTHTPMFHQMEGLIVDKDISFTNLKGTLHDFLRNFFEEDLQIRFRPSYFPFTEPSAEVDVMGKNGKWLEVLGCGMVHPNVLRNVGIDPEVYSGFAFGMGMERLTMLRYGVTDLRAFFENDLRFLKQFK.

E252 lines the Mg(2+) pocket.

It belongs to the class-II aminoacyl-tRNA synthetase family. Phe-tRNA synthetase alpha subunit type 1 subfamily. In terms of assembly, tetramer of two alpha and two beta subunits. The cofactor is Mg(2+).

It localises to the cytoplasm. It catalyses the reaction tRNA(Phe) + L-phenylalanine + ATP = L-phenylalanyl-tRNA(Phe) + AMP + diphosphate + H(+). The polypeptide is Phenylalanine--tRNA ligase alpha subunit (Yersinia enterocolitica serotype O:8 / biotype 1B (strain NCTC 13174 / 8081)).